The sequence spans 152 residues: Interleukin-3 (152 aa).

Positions 1–19 (MSCLPVLLLLQLLVSPGLQ) are cleaved as a signal peptide. N34 and N89 each carry an N-linked (GlcNAc...) asparagine glycan. The cysteines at positions 35 and 103 are disulfide-linked.

It belongs to the IL-3 family. In terms of assembly, monomer. In terms of tissue distribution, activated T-cells, mast cells, natural killer cells.

The protein localises to the secreted. Granulocyte/macrophage colony-stimulating factors are cytokines that act in hematopoiesis by controlling the production, differentiation, and function of 2 related white cell populations of the blood, the granulocytes and the monocytes-macrophages. Its function is as follows. This CSF induces granulocytes, macrophages, mast cells, stem cells, erythroid cells, eosinophils and megakaryocytes. This is Interleukin-3 (IL3) from Hylobates lar (Lar gibbon).